The primary structure comprises 358 residues: MTLETPVRVLIVDDSAVVRQMLTEILSRDAGIEVVGSAADPLLAREKIKRLNPDVITLDVEMPRMDGLVFLENLMRLRPTPVVMISSLTERGADTTLQALSLGAVDFVSKPKIDVARGLEGYAEEIVSKVKMAAKAKVSALNRPSAPKVTLDMQSAPVAGSALRFRTTDRLIAIGASAGGTEALRVVLEHMPADAPAVVMTQHLPASFSTAFAERLNRHSAMSVREATDGEAILPGHAYLPPGGQHLRIIRDGARWRCRIDDGPPVNRHKPAVDVLFRSVAANAGPNAVGAILTGMGDDGARGLLEMLQAGAPTLVQDEASSVVWGMPGAAYKLGAAQEVVPLDRVAERLLALSAQAR.

Residues R8–E125 form the Response regulatory domain. D59 is modified (4-aspartylphosphate). Residues F165–A352 form the CheB-type methylesterase domain. Residues S177, H203, and D299 contribute to the active site.

This sequence belongs to the CheB family. In terms of processing, phosphorylated by CheA. Phosphorylation of the N-terminal regulatory domain activates the methylesterase activity.

The protein resides in the cytoplasm. It catalyses the reaction [protein]-L-glutamate 5-O-methyl ester + H2O = L-glutamyl-[protein] + methanol + H(+). The catalysed reaction is L-glutaminyl-[protein] + H2O = L-glutamyl-[protein] + NH4(+). In terms of biological role, involved in chemotaxis. Part of a chemotaxis signal transduction system that modulates chemotaxis in response to various stimuli. Catalyzes the demethylation of specific methylglutamate residues introduced into the chemoreceptors (methyl-accepting chemotaxis proteins or MCP) by CheR. Also mediates the irreversible deamidation of specific glutamine residues to glutamic acid. This is Protein-glutamate methylesterase/protein-glutamine glutaminase 1 from Xanthomonas axonopodis pv. citri (strain 306).